The following is a 238-amino-acid chain: 1-(5-phosphoribosyl)-5-[(5-phosphoribosylamino)methylideneamino] imidazole-4-carboxamide isomerase (238 aa).

D8 serves as the catalytic Proton acceptor. Residue D127 is the Proton donor of the active site.

Belongs to the HisA/HisF family.

Its subcellular location is the cytoplasm. The catalysed reaction is 1-(5-phospho-beta-D-ribosyl)-5-[(5-phospho-beta-D-ribosylamino)methylideneamino]imidazole-4-carboxamide = 5-[(5-phospho-1-deoxy-D-ribulos-1-ylimino)methylamino]-1-(5-phospho-beta-D-ribosyl)imidazole-4-carboxamide. It participates in amino-acid biosynthesis; L-histidine biosynthesis; L-histidine from 5-phospho-alpha-D-ribose 1-diphosphate: step 4/9. This chain is 1-(5-phosphoribosyl)-5-[(5-phosphoribosylamino)methylideneamino] imidazole-4-carboxamide isomerase, found in Nitratiruptor sp. (strain SB155-2).